The sequence spans 423 residues: Lysosomal acid phosphatase (423 aa).

The first 30 residues, 1–30 (MAGRQSGWSQAALLQFLLGMCLMVMPPIQA), serve as a signal peptide directing secretion. Over 31–380 (RSLRFVTLLY…QLASDTADTE (350 aa)) the chain is Lumenal. His42 functions as the Nucleophile in the catalytic mechanism. Asn92, Asn133, Asn167, Asn177, Asn191, Asn197, and Asn267 each carry an N-linked (GlcNAc...) asparagine glycan. Disulfide bonds link Cys159–Cys370, Cys212–Cys310, and Cys345–Cys349. Asp287 (proton donor) is an active-site residue. 2 N-linked (GlcNAc...) asparagine glycosylation sites follow: Asn322 and Asn331. Residues 381–401 (VIVALAVCGSILFLLIVLLLT) form a helical membrane-spanning segment. At 402–423 (VLFRMQAQPPGYHHVADREDHA) the chain is on the cytoplasmic side.

The protein belongs to the histidine acid phosphatase family. The membrane-bound form is converted to the soluble form by sequential proteolytic processing. First, the C-terminal cytoplasmic tail is removed. Cleavage by a lysosomal protease releases the soluble form in the lysosome lumen.

Its subcellular location is the lysosome membrane. The protein localises to the lysosome lumen. It carries out the reaction a phosphate monoester + H2O = an alcohol + phosphate. The protein is Lysosomal acid phosphatase (Acp2) of Rattus norvegicus (Rat).